The following is a 142-amino-acid chain: Large ribosomal subunit protein uL13 (142 aa).

It belongs to the universal ribosomal protein uL13 family. In terms of assembly, part of the 50S ribosomal subunit.

Functionally, this protein is one of the early assembly proteins of the 50S ribosomal subunit, although it is not seen to bind rRNA by itself. It is important during the early stages of 50S assembly. The protein is Large ribosomal subunit protein uL13 of Alkalilimnicola ehrlichii (strain ATCC BAA-1101 / DSM 17681 / MLHE-1).